A 412-amino-acid polypeptide reads, in one-letter code: Inactive serine protease 35 (412 aa).

The N-terminal stretch at 1-23 (MGAMFFGLMLFTLGWTLIDGSES) is a signal peptide. Residue N110 is glycosylated (N-linked (GlcNAc...) asparagine). One can recognise a Peptidase S1 domain in the interval 124–407 (VYGTDSRFSI…ICLWMHGDDA (284 aa)). C154 and C170 form a disulfide bridge. Residues 192–207 (RNKGGGKRRRGSRRNR) are compositionally biased toward basic residues. The segment at 192-246 (RNKGGGKRRRGSRRNRREVSGAGREGSQDSLKETAKAGRRRKGSARRQRAADGRP) is disordered. The span at 217–227 (GSQDSLKETAK) shows a compositional bias: basic and acidic residues. The segment covering 228 to 239 (AGRRRKGSARRQ) has biased composition (basic residues).

This sequence belongs to the peptidase S1 family.

It localises to the secreted. The protein is Inactive serine protease 35 (PRSS35) of Bos taurus (Bovine).